We begin with the raw amino-acid sequence, 317 residues long: Probable deoxyhypusine synthase 1 (317 aa).

Lys-285 functions as the Nucleophile in the catalytic mechanism.

This sequence belongs to the deoxyhypusine synthase family. The cofactor is NAD(+).

It carries out the reaction [eIF5A protein]-L-lysine + spermidine = [eIF5A protein]-deoxyhypusine + propane-1,3-diamine. Its pathway is protein modification; eIF5A hypusination. Its function is as follows. Catalyzes the NAD-dependent oxidative cleavage of spermidine and the subsequent transfer of the butylamine moiety of spermidine to the epsilon-amino group of a specific lysine residue of the eIF-5A precursor protein to form the intermediate deoxyhypusine residue. The protein is Probable deoxyhypusine synthase 1 (dys1) of Methanosarcina mazei (strain ATCC BAA-159 / DSM 3647 / Goe1 / Go1 / JCM 11833 / OCM 88) (Methanosarcina frisia).